Here is a 384-residue protein sequence, read N- to C-terminus: Putative F-box/kelch-repeat protein At3g27910 (384 aa).

The region spanning 27–79 is the F-box domain; that stretch reads SPTSLPLPDEIIVNCFAYIPRCDYPSLSLVSKTFNRLITSIELNIVRSLFQRT. Kelch repeat units lie at residues 138 to 184, 185 to 235, 237 to 274, and 275 to 323; these read KIYV…IVDG, KIYV…VMNK, IYIMDRGNGIVFDPKKGVWERDFLLDRDWVVGSCVIDN, and MLYT…MANH.

The chain is Putative F-box/kelch-repeat protein At3g27910 from Arabidopsis thaliana (Mouse-ear cress).